The primary structure comprises 331 residues: Type 2 lactosamine alpha-2,3-sialyltransferase (331 aa).

The Cytoplasmic portion of the chain corresponds to 1 to 4; that stretch reads MKGY. The chain crosses the membrane as a helical; Signal-anchor for type II membrane protein span at residues 5–25; it reads VVAIFLSSIFLYYVLYCILWG. The Lumenal segment spans residues 26–331; that stretch reads TNGYWFPNEE…KKMVINLTQN (306 aa). N-linked (GlcNAc...) asparagine glycosylation is found at N129, N181, N295, N308, and N327.

The protein belongs to the glycosyltransferase 29 family.

The protein resides in the golgi apparatus membrane. It carries out the reaction a neolactoside nLc4Cer(d18:1(4E)) + CMP-N-acetyl-beta-neuraminate = a neolactoside IV(3)-alpha-NeuAc-nLc4Cer(d18:1(4E)) + CMP + H(+). It catalyses the reaction a beta-D-galactosyl-(1-&gt;4)-N-acetyl-beta-D-glucosaminyl derivative + CMP-N-acetyl-beta-neuraminate = an N-acetyl-alpha-neuraminyl-(2-&gt;3)-beta-D-galactosyl-(1-&gt;4)-N-acetyl-beta-D-glucosaminyl derivative + CMP + H(+). The enzyme catalyses a neolactoside nLc6Cer(d18:1(4E)) + CMP-N-acetyl-beta-neuraminate = a neolactoside VI(3)-alpha-NeuNAc-nLc6Cer(d18:1(4E)) + CMP + H(+). In terms of biological role, transfers the sialyl residue from CMP-N-acetyl-beta-neuraminate to the terminal galactose residue on sugar chains of glycoproteins and glycolipids. It's alpha-2,3-sialyltransferase activity is specific toward type II glycan chains (Galbeta1-4GlcNAc) on glycoproteins and glycolipids such as neolactosides nLc4Cer and nLc6Cer, whose sialyl-products serve as precursors for the Lewis X antigen. Critically involved in the synthesis of functional selectin ligands needed for neutrophil recruitment during inflammation and lymphocyte homing to the lymph nodes. The sequence is that of Type 2 lactosamine alpha-2,3-sialyltransferase (St3gal6) from Rattus norvegicus (Rat).